The sequence spans 249 residues: Triosephosphate isomerase (249 aa).

Position 12-14 (12-14 (NWK)) interacts with substrate. His96 (electrophile) is an active-site residue. Glu166 serves as the catalytic Proton acceptor. Residues Gly172, Ser211, and 232–233 (GG) each bind substrate.

Belongs to the triosephosphate isomerase family. Homodimer.

The protein resides in the cytoplasm. The catalysed reaction is D-glyceraldehyde 3-phosphate = dihydroxyacetone phosphate. The protein operates within carbohydrate biosynthesis; gluconeogenesis. It functions in the pathway carbohydrate degradation; glycolysis; D-glyceraldehyde 3-phosphate from glycerone phosphate: step 1/1. Involved in the gluconeogenesis. Catalyzes stereospecifically the conversion of dihydroxyacetone phosphate (DHAP) to D-glyceraldehyde-3-phosphate (G3P). This Xanthobacter flavus protein is Triosephosphate isomerase.